The sequence spans 215 residues: Adenylate kinase (215 aa).

Residue 10–15 coordinates ATP; the sequence is GTGKGT. The segment at 30–59 is NMP; sequence STGDMLRESVVLKNKIGMIIKNIIEEGKLV. AMP-binding positions include Thr-31, Arg-36, 57-59, 85-88, and Gln-92; these read KLV and GFPR. Residues 122–159 are LID; the sequence is GRRIHIQSGRIYHVKFKPPKIKDKDDLTGQTLITRKDD. Residues Arg-123 and 132-133 contribute to the ATP site; that span reads IY. Residues Arg-156 and Arg-167 each contribute to the AMP site. Residue Leu-200 participates in ATP binding.

Belongs to the adenylate kinase family. Monomer.

It localises to the cytoplasm. It carries out the reaction AMP + ATP = 2 ADP. It functions in the pathway purine metabolism; AMP biosynthesis via salvage pathway; AMP from ADP: step 1/1. In terms of biological role, catalyzes the reversible transfer of the terminal phosphate group between ATP and AMP. Plays an important role in cellular energy homeostasis and in adenine nucleotide metabolism. The protein is Adenylate kinase of Buchnera aphidicola subsp. Acyrthosiphon pisum (strain 5A).